The sequence spans 239 residues: Ribonuclease 3 (239 aa).

One can recognise an RNase III domain in the interval 18-141 (YLTLEKALGY…LMAGVYLEAG (124 aa)). Mg(2+) is bound at residue Glu-54. Asp-58 is a catalytic residue. 2 residues coordinate Mg(2+): Ser-127 and Glu-130. Glu-130 is an active-site residue. Positions 168-237 (DYKTALQELT…AYQALQKLKE (70 aa)) constitute a DRBM domain.

It belongs to the ribonuclease III family. Homodimer. Requires Mg(2+) as cofactor.

The protein resides in the cytoplasm. It catalyses the reaction Endonucleolytic cleavage to 5'-phosphomonoester.. Digests double-stranded RNA. Involved in the processing of primary rRNA transcript to yield the immediate precursors to the large and small rRNAs (23S and 16S). Processes some mRNAs, and tRNAs when they are encoded in the rRNA operon. Processes pre-crRNA and tracrRNA of type II CRISPR loci if present in the organism. This Helicobacter pylori (strain P12) protein is Ribonuclease 3.